A 217-amino-acid chain; its full sequence is Large ribosomal subunit protein uL3 (217 aa).

The residue at position 152 (Gln-152) is an N5-methylglutamine.

Belongs to the universal ribosomal protein uL3 family. Part of the 50S ribosomal subunit. Forms a cluster with proteins L14 and L19. In terms of processing, methylated by PrmB.

Functionally, one of the primary rRNA binding proteins, it binds directly near the 3'-end of the 23S rRNA, where it nucleates assembly of the 50S subunit. The sequence is that of Large ribosomal subunit protein uL3 from Blochmanniella pennsylvanica (strain BPEN).